The following is a 438-amino-acid chain: UDP-N-acetylmuramoylalanine--D-glutamate ligase (438 aa).

112 to 118 (GSNGKST) is a binding site for ATP.

Belongs to the MurCDEF family.

It localises to the cytoplasm. It catalyses the reaction UDP-N-acetyl-alpha-D-muramoyl-L-alanine + D-glutamate + ATP = UDP-N-acetyl-alpha-D-muramoyl-L-alanyl-D-glutamate + ADP + phosphate + H(+). Its pathway is cell wall biogenesis; peptidoglycan biosynthesis. Its function is as follows. Cell wall formation. Catalyzes the addition of glutamate to the nucleotide precursor UDP-N-acetylmuramoyl-L-alanine (UMA). The protein is UDP-N-acetylmuramoylalanine--D-glutamate ligase of Sodalis glossinidius (strain morsitans).